Here is a 772-residue protein sequence, read N- to C-terminus: Transcription factor sdnS (772 aa).

The zn(2)-C6 fungal-type DNA-binding region spans 23–53 (CWECRRRKIRCQFGAGNDTVCLPCQARGSTC). Disordered stretches follow at residues 94–121 (EAGGQLANRSTTQSNRGSRSPSPDSAQN) and 156–180 (ASMLTPESDHSPAPSKLTPSRNSKT). Polar residues predominate over residues 100–121 (ANRSTTQSNRGSRSPSPDSAQN).

It is found in the nucleus. It functions in the pathway antibiotic biosynthesis. Transcription factor; part of the gene cluster that mediates the biosynthesis of sordarin and hypoxysordarin, glycoside antibiotics with a unique tetracyclic diterpene aglycone structure. First, the geranylgeranyl diphosphate synthase sdnC constructs GGDP from farnesyl diphosphate and isopentenyl diphosphate. The diterpene cyclase sdnA then catalyzes the cyclization of GGDP to afford cycloaraneosene. Cycloaraneosene is then hydroxylated four times by the putative cytochrome P450 monooxygenases sdnB, sdnE, sdnF and sdnH to give a hydroxylated cycloaraneosene derivative such as cycloaraneosene-8,9,13,19-tetraol. Although the order of the hydroxylations is unclear, at least C8, C9 and C13 of the cycloaraneosene skeleton are hydroxylated before the sordaricin formation. Dehydration of the 13-hydroxy group of the hydroxylated cycloaraneosene derivative might be catalyzed by an unassigned hypothetical protein such as sdnG and sdnP to construct the cyclopentadiene moiety. The FAD-dependent oxidoreductase sdnN is proposed to catalyze the oxidation at C9 of the hydroxylated cycloaraneosene derivative and also catalyze the Baeyer-Villiger oxidation to give the lactone intermediate. The presumed lactone intermediate would be hydrolyzed to give an acrolein moiety and a carboxylate moiety. Then, [4+2]cycloaddition would occur between the acrolein moiety and the cyclopentadiene moiety to give sordaricin. SdnN might also be involved in the [4+2]cycloaddition after the hypothesized oxidation to accommodate the oxidized product and prompt the [4+2]cycloaddition. GDP-6-deoxy-D-altrose may be biosynthesized from GDP-D-mannose by the putative GDP-mannose-4,6-dehydratase sdnI and the short-chain dehydrogenase sdnK. The glycosyltransferase sdnJ catalyzes the attachment of 6-deoxy-D-altrose onto the 19-hydroxy group of sordaricin to give 4'-O-demethylsordarin. The methyltransferase sdnD would complete the biosynthesis of sordarin. Sordarin can be further modified into hypoxysordarin. The unique acyl chain at the 3'-hydroxy group of hypoxysordarin would be constructed by an iterative type I PKS sdnO and the trans-acting polyketide methyltransferase sdnL. SdnL would be responsible for the introduction of an alpha-methyl group of the polyketide chain. Alternatively, the beta-lactamase-like protein sdnR might be responsible for the cleavage and transfer of the polyketide chain from the PKS sdnO to sordarin. Two putative cytochrome P450 monooxygenases, sdnQ and sdnT, might catalyze the epoxidations of the polyketide chain to complete the biosynthesis of hypoxysordarin. Transcriptional regulators sdnM and sdnS are presumably encoded for the transcriptional regulation of the expression of the sdn gene cluster. The protein is Transcription factor sdnS of Sordaria araneosa (Pleurage araneosa).